Reading from the N-terminus, the 247-residue chain is Eukaryotic translation initiation factor 3 subunit J (247 aa).

Disordered regions lie at residues 1-64 (MADW…KTLK) and 77-101 (EEKR…EEQM). Residues 24 to 45 (EGEDEDDDIKESWDDDDEDEKK) are compositionally biased toward acidic residues. Residues 43–108 (EKKEDEAKNT…EQMAEKLRRQ (66 aa)) adopt a coiled-coil conformation.

It belongs to the eIF-3 subunit J family. As to quaternary structure, component of the eukaryotic translation initiation factor 3 (eIF-3) complex.

It is found in the cytoplasm. Component of the eukaryotic translation initiation factor 3 (eIF-3) complex, which is involved in protein synthesis of a specialized repertoire of mRNAs and, together with other initiation factors, stimulates binding of mRNA and methionyl-tRNAi to the 40S ribosome. The eIF-3 complex specifically targets and initiates translation of a subset of mRNAs involved in cell proliferation. The polypeptide is Eukaryotic translation initiation factor 3 subunit J (Nematostella vectensis (Starlet sea anemone)).